The chain runs to 337 residues: MATVDVINGDSISTLHSDIIQTQILTRLDGPTLASTATTSSYLQTLCTEEKLWQELSIDTWPSINDPRVVQAISSFPSGYRSFFADSYPFTEHTWQSEKHDPPTGLISAVDLYYRGEIIYSKVQEMETEKGKSGWFLSSPFRVDILDPKESVQTRIRYPGGDYEAWVKDMEESMKLNWILIDPIKKRAANISSRKAVSARRNWLTGDLEIRFSTVVTAEAAEVAAVVSCGSAEAWKEVDEEVGGEIHVRDVRLQVEDIEGKCMKGRDSLVILQGLLDGKRSCKDDEERRAKERYEEYVRMKIQWRENKERREKAQDTICMIFGFSMFVLLWSFILLR.

The region spanning 10–58 (DSISTLHSDIIQTQILTRLDGPTLASTATTSSYLQTLCTEEKLWQELSI) is the F-box domain.

The chain is F-box protein At2g27310 from Arabidopsis thaliana (Mouse-ear cress).